Reading from the N-terminus, the 92-residue chain is Small ribosomal subunit protein uS19 (92 aa).

The protein belongs to the universal ribosomal protein uS19 family.

In terms of biological role, protein S19 forms a complex with S13 that binds strongly to the 16S ribosomal RNA. The protein is Small ribosomal subunit protein uS19 of Polaromonas sp. (strain JS666 / ATCC BAA-500).